We begin with the raw amino-acid sequence, 259 residues long: L-cysteine S-thiosulfotransferase subunit SoxA (259 aa).

The signal sequence occupies residues 1–23 (MRKLWFLPILLGAVGGVSLYAIA). One can recognise a Cytochrome c domain in the interval 50 to 135 (VYAEQGRDMF…SIATYVATLS (86 aa)). Heme c contacts are provided by C70, C73, H74, C108, C171, C174, and H175. R216 is a binding site for substrate. Heme c is bound at residue C220. The active-site Cysteine persulfide intermediate is C220.

It belongs to the SoxA family. As to quaternary structure, heterodimer of SoxA and SoxX. Heme c is required as a cofactor. In terms of processing, cysteine persulfide at Cys-220.

It localises to the periplasm. It catalyses the reaction L-cysteinyl-[SoxY protein] + thiosulfate + 2 Fe(III)-[cytochrome c] = S-sulfosulfanyl-L-cysteinyl-[SoxY protein] + 2 Fe(II)-[cytochrome c] + 2 H(+). The catalysed reaction is S-sulfanyl-L-cysteinyl-[SoxY protein] + thiosulfate + 2 Fe(III)-[cytochrome c] = S-(2-sulfodisulfanyl)-L-cysteinyl-[SoxY protein] + 2 Fe(II)-[cytochrome c] + 2 H(+). Functionally, C-type diheme cytochrome, which is part of the SoxAX cytochrome complex involved in sulfur oxidation. The SoxAX complex catalyzes the formation of a heterodisulfide bond between the conserved cysteine residue on a sulfur carrier SoxYZ complex subunit SoxY and thiosulfate or other inorganic sulfur substrates. This leads to the liberation of two electrons, which may be transferred from the SoxAX complex to another cytochrome c that then channels them into the respiratory electron transport chain. Some electrons may be used for reductive CO(2) fixation. The chain is L-cysteine S-thiosulfotransferase subunit SoxA from Hydrogenobacter thermophilus (strain DSM 6534 / IAM 12695 / TK-6).